The sequence spans 365 residues: tRNA/tmRNA (uracil-C(5))-methyltransferase (365 aa).

The S-adenosyl-L-methionine site is built by Q189, Y217, N222, E238, and D298. Catalysis depends on C323, which acts as the Nucleophile. The Proton acceptor role is filled by E357.

It belongs to the class I-like SAM-binding methyltransferase superfamily. RNA M5U methyltransferase family. TrmA subfamily.

It catalyses the reaction uridine(54) in tRNA + S-adenosyl-L-methionine = 5-methyluridine(54) in tRNA + S-adenosyl-L-homocysteine + H(+). The enzyme catalyses uridine(341) in tmRNA + S-adenosyl-L-methionine = 5-methyluridine(341) in tmRNA + S-adenosyl-L-homocysteine + H(+). Its function is as follows. Dual-specificity methyltransferase that catalyzes the formation of 5-methyluridine at position 54 (m5U54) in all tRNAs, and that of position 341 (m5U341) in tmRNA (transfer-mRNA). This chain is tRNA/tmRNA (uracil-C(5))-methyltransferase, found in Shewanella pealeana (strain ATCC 700345 / ANG-SQ1).